The following is a 471-amino-acid chain: Eremophilane O-acetyltransferase prx11 (471 aa).

It belongs to the fumigaclavine B O-acetyltransferase family. In terms of assembly, monomer.

Its pathway is sesquiterpene biosynthesis. Functionally, O-acetyltransferase; part of the gene cluster that mediates the biosynthesis of PR-toxin, a bicyclic sesquiterpene belonging to the eremophilane class and acting as a mycotoxin. The first step of the pathway is catalyzed by the aristolochene synthase which performs the cyclization of trans,trans-farnesyl diphosphate (FPP) to the bicyclic sesquiterpene aristolochene. Following the formation of aristolochene, the non-oxygenated aristolochene is converted to the trioxygenated intermediate eremofortin B, via 7-epi-neopetasone. This conversion appears to involve three enzymes, a hydroxysterol oxidase-like enzyme, the quinone-oxidase prx3 that forms the quinone-type-structure in the bicyclic nucleus of aristolochene with the C8-oxo group and the C-3 hydroxyl group, and the P450 monooxygenase prx9 that introduces the epoxide at the double bond between carbons 1 and 2. No monoxy or dioxy-intermediates have been reported to be released to the broth, so these three early oxidative reactions may be coupled together. Eremofortin B is further oxidized by another P450 monooxygenase, that introduces a second epoxide between carbons 7 and 11 prior to acetylation to eremofortin A by the acetyltransferase prx11. The second epoxidation may be performed by a second P450 monooxygenase. After the acetylation step, eremofortin A is converted to eremofortin C and then to PR-toxin. First the conversion of eremofortin A to eremofortin C proceeds by oxidation of the side chain of the molecule at C-12 and is catalyzed by the short-chain oxidoreductase prx1. The cytochrome P450 monooxygenase prx8 also plays a role in this step. The primary alcohol formed at C-12 is finally oxidized by the short-chain alcohol dehydrogenase prx4 that forms PR-toxin. This is Eremophilane O-acetyltransferase prx11 from Penicillium rubens (strain ATCC 28089 / DSM 1075 / NRRL 1951 / Wisconsin 54-1255) (Penicillium chrysogenum).